A 391-amino-acid chain; its full sequence is MTKVYFIAGETSGDFIGGRIIQNLKSNKGVEFTGIGGKCMEEAGNFKSLFPITCINLMGFVEILPHIFNLKKLIDKTVQDIINSQADLLITIDSPGFTYRVAKQLRKLLPKLKMIHIVAPSVWAYKDGRAVKYAKIYDCLFALLPFEPPYFTKVGLDCRYIGHPIMEQEFYSDKIALREEFKIDKNERVLCVTLGSRQGEIRKHLPVFISSIEEIFKSCNNLKVIFTLANPAHEAIIKPFLEDVQFHYLFSSARLKAYAVADAALAKSGTNTLEIVASGTPMVVAYQVNLISFFIIRLLIKIKYVTLINIIAGSEIIPEFIQFNCRASLISNTLQELLFNSKKAYKQVIESQKILQTLGLKSNRSPSYIAAEIIKQEFLESKIKLLKENST.

Belongs to the LpxB family.

The catalysed reaction is a lipid X + a UDP-2-N,3-O-bis[(3R)-3-hydroxyacyl]-alpha-D-glucosamine = a lipid A disaccharide + UDP + H(+). It functions in the pathway bacterial outer membrane biogenesis; LPS lipid A biosynthesis. Its function is as follows. Condensation of UDP-2,3-diacylglucosamine and 2,3-diacylglucosamine-1-phosphate to form lipid A disaccharide, a precursor of lipid A, a phosphorylated glycolipid that anchors the lipopolysaccharide to the outer membrane of the cell. This is Lipid-A-disaccharide synthase from Rickettsia akari (strain Hartford).